The following is a 247-amino-acid chain: Exosome complex component Rrp4 (247 aa).

Residues Gly-70–Lys-143 enclose the S1 motif domain. Positions Ser-149–Ile-211 constitute a KH domain.

This sequence belongs to the RRP4 family. Component of the archaeal exosome complex. Forms a trimer of Rrp4 and/or Csl4 subunits. The trimer associates with a hexameric ring-like arrangement composed of 3 Rrp41-Rrp42 heterodimers.

The protein resides in the cytoplasm. Its function is as follows. Non-catalytic component of the exosome, which is a complex involved in RNA degradation. Increases the RNA binding and the efficiency of RNA degradation. Confers strong poly(A) specificity to the exosome. The protein is Exosome complex component Rrp4 of Sulfurisphaera tokodaii (strain DSM 16993 / JCM 10545 / NBRC 100140 / 7) (Sulfolobus tokodaii).